The sequence spans 418 residues: Putative ion-transport protein YfeO (418 aa).

The next 11 helical transmembrane spans lie at methionine 9–methionine 31, serine 55–serine 77, leucine 90–alanine 112, proline 122–proline 140, tryptophan 147–isoleucine 169, proline 189–proline 211, isoleucine 223–leucine 244, leucine 259–phenylalanine 281, tyrosine 301–glycine 323, valine 343–valine 363, and valine 376–leucine 398.

It belongs to the chloride channel (TC 2.A.49) family.

The protein resides in the cell membrane. The protein is Putative ion-transport protein YfeO (yfeO) of Escherichia coli O157:H7.